We begin with the raw amino-acid sequence, 910 residues long: Anoctamin-6 (910 aa).

At 1-300 the chain is on the cytoplasmic side; that stretch reads MKKMSRNVLL…YGEKIGIYFA (300 aa). The chain crosses the membrane as a helical span at residues 301 to 321; that stretch reads WLGYYTQMLLLAAVVGVACFL. Residues 322–375 lie on the Extracellular side of the membrane; that stretch reads YGYLNQDNCTWSKEVCHPDIGGKIIMCPQCDRLCPFWKLNITCESSKKLCIFDS. A glycan (N-linked (GlcNAc...) asparagine) is linked at Asn-329. Cystine bridges form between Cys-330–Cys-371, Cys-337–Cys-364, Cys-348–Cys-806, Cys-351–Cys-355, and Cys-595–Cys-600. Residue Asn-361 is glycosylated (N-linked (GlcNAc...) asparagine). A helical membrane pass occupies residues 376–396; sequence FGTLVFAVFMGVWVTLFLEFW. At 397–455 the chain is on the cytoplasmic side; that stretch reads KRRQAELEYEWDTVELQQEEQARPEYEARCTHVVINEITQEEERIPFTAWGKCIRITLC. Residues 456–476 form a helical membrane-spanning segment; that stretch reads ASAVFFWILLIIASVIGIIVY. At 477-509 the chain is on the extracellular side; it reads RLSVFIVFSAKLPKNINGTDPIQKYLTPQTATS. Residue Asn-493 is glycosylated (N-linked (GlcNAc...) asparagine). The chain crosses the membrane as a helical span at residues 510 to 530; it reads ITASIISFIIIMILNTIYEKV. Residues 531–551 lie on the Cytoplasmic side of the membrane; it reads AIMITNFELPRTQTDYENSLT. Residues 552 to 572 traverse the membrane as a helical segment; that stretch reads MKMFLFQFVNYYSSCFYIAFF. The Extracellular portion of the chain corresponds to 573–601; sequence KGKFVGYPGDPVYWLGKYRNEECDPGGCL. The helical transmembrane segment at 602 to 621 threads the bilayer; it reads LELTTQLTIIMGGKAIWNNI. Over 622–663 the chain is Cytoplasmic; sequence QEVLLPWIMNLIGRFHRVSGSEKITPRWEQDYHLQPMGKLGL. Ca(2+)-binding residues include Glu-623, Glu-666, and Glu-669. The next 2 helical transmembrane spans lie at 664 to 684 and 685 to 705; these read FYEYLEMIIQFGFVTLFVASF and PLAPLLALVNNILEIRVDAWK. The Cytoplasmic portion of the chain corresponds to 706–722; that stretch reads LTTQFRRLVPEKAQDIG. A helical transmembrane segment spans residues 723 to 743; sequence AWQPIMQGIAILAVVTNAMII. Over 744–836 the chain is Extracellular; the sequence is AFTSDMIPRL…YWHVIAAKLA (93 aa). 3 N-linked (GlcNAc...) asparagine glycosylation sites follow: Asn-777, Asn-790, and Asn-802. A helical transmembrane segment spans residues 837–857; the sequence is FIIVMEHVIYSVKFFISYAIP. Topologically, residues 858–910 are cytoplasmic; sequence DVSKRTKSKIQREKYLTQKLLHENHLKDMTKNMGVIAERMIEAVDNNLRPKSE.

The protein belongs to the anoctamin family. As to quaternary structure, homodimer. Expressed in embryonic stem cell, fetal liver, retina, chronic myologenous leukemia and intestinal cancer.

Its subcellular location is the cell membrane. The catalysed reaction is a 1,2-diacyl-sn-glycero-3-phospho-L-serine(in) = a 1,2-diacyl-sn-glycero-3-phospho-L-serine(out). The enzyme catalyses a beta-D-galactosyl-(1&lt;-&gt;1')-N-acylsphing-4-enine(out) = a beta-D-galactosyl-(1&lt;-&gt;1')-N-acylsphing-4-enine(in). It catalyses the reaction a 1,2-diacyl-sn-glycero-3-phosphocholine(in) = a 1,2-diacyl-sn-glycero-3-phosphocholine(out). Exhibits synergistic gating by Ca(2+) and voltage. Inhibited by some non-specific cation channel blockers such as: ruthenium red, 2-aminoethyl diphenylborinate (2APB), gadolinium and cadmium ions. Its activity is regulated as follows. (Microbial infection) Activated by SARS coronavirus-2/SARS-CoV-2 spike protein. Functionally, small-conductance calcium-activated nonselective cation (SCAN) channel which acts as a regulator of phospholipid scrambling in platelets and osteoblasts. Phospholipid scrambling results in surface exposure of phosphatidylserine which in platelets is essential to trigger the clotting system whereas in osteoblasts is essential for the deposition of hydroxyapatite during bone mineralization. Has calcium-dependent phospholipid scramblase activity; scrambles phosphatidylserine, phosphatidylcholine and galactosylceramide. Can generate outwardly rectifying chloride channel currents in airway epithelial cells and Jurkat T lymphocytes. In terms of biological role, (Microbial infection) Upon SARS coronavirus-2/SARS-CoV-2 infection, is activated by spike protein which increases the amplitude of spontaneous Ca(2+) signals and is required for spike-mediated syncytia. This Homo sapiens (Human) protein is Anoctamin-6.